A 141-amino-acid polypeptide reads, in one-letter code: Putative nickel-responsive regulator (141 aa).

Ni(2+)-binding residues include His-80, His-91, His-93, and Cys-99.

This sequence belongs to the transcriptional regulatory CopG/NikR family. Ni(2+) serves as cofactor.

In terms of biological role, transcriptional regulator. The polypeptide is Putative nickel-responsive regulator (Methanococcus aeolicus (strain ATCC BAA-1280 / DSM 17508 / OCM 812 / Nankai-3)).